Reading from the N-terminus, the 740-residue chain is Ribosomal protein S6 kinase alpha-3 (740 aa).

The tract at residues 1-26 (MPLAQLADPWQKMAVESPSDSAENGQ) is disordered. Residues 68-327 (FELLKVLGQG…VEEIKRHSFF (260 aa)) enclose the Protein kinase 1 domain. ATP contacts are provided by residues 74 to 82 (LGQGSFGKV) and K100. Catalysis depends on D193, which acts as the Proton acceptor. The residue at position 227 (S227) is a Phosphoserine; by PDPK1. One can recognise an AGC-kinase C-terminal domain in the interval 328 to 397 (STIDWNKLYR…VAITSDDESQ (70 aa)). Position 365 is a phosphothreonine (T365). Phosphoserine is present on residues S369 and S375. S386 is modified (phosphoserine; by autocatalysis and MAPKAPK2). At S415 the chain carries Phosphoserine. Residues 422–679 (YEVKEDIGVG…AALVLRHPWI (258 aa)) enclose the Protein kinase 2 domain. ATP-binding positions include 428 to 436 (IGVGSYSVC) and K451. Y529 bears the Phosphotyrosine; by FGFR3 mark. Residue D539 is the Proton acceptor of the active site. 2 positions are modified to phosphoserine: S556 and S715.

The protein belongs to the protein kinase superfamily. AGC Ser/Thr protein kinase family. S6 kinase subfamily. As to quaternary structure, forms a complex with either MAPK1/ERK2 or MAPK3/ERK1 in quiescent cells. Transiently dissociates following mitogenic stimulation. Interacts with NFATC4, ETV1/ER81 and FGFR1. It depends on Mg(2+) as a cofactor. In terms of processing, activated by phosphorylation at Ser-227 by PDPK1. Autophosphorylated on Ser-386, as part of the activation process. May be phosphorylated at Thr-365 and Ser-369 by MAPK1/ERK2 and MAPK3/ERK1. Can also be activated via phosphorylation at Ser-386 by MAPKAPK2. Post-translationally, N-terminal myristoylation results in an activated kinase in the absence of added growth factors. As to expression, intestine, thymus, lung, heart and brain.

The protein localises to the nucleus. Its subcellular location is the cytoplasm. The catalysed reaction is L-seryl-[protein] + ATP = O-phospho-L-seryl-[protein] + ADP + H(+). The enzyme catalyses L-threonyl-[protein] + ATP = O-phospho-L-threonyl-[protein] + ADP + H(+). Its activity is regulated as follows. Upon extracellular signal or mitogen stimulation, phosphorylated at Thr-577 in the C-terminal kinase domain (CTKD) by MAPK1/ERK2 and MAPK3/ERK1. The activated CTKD then autophosphorylates Ser-386, allowing binding of PDPK1, which in turn phosphorylates Ser-227 in the N-terminal kinase domain (NTDK) leading to the full activation of the protein and subsequent phosphorylation of the substrates by the NTKD. Serine/threonine-protein kinase that acts downstream of ERK (MAPK1/ERK2 and MAPK3/ERK1) signaling and mediates mitogenic and stress-induced activation of the transcription factors CREB1, ETV1/ER81 and NR4A1/NUR77, regulates translation through RPS6 and EIF4B phosphorylation, and mediates cellular proliferation, survival, and differentiation by modulating mTOR signaling and repressing pro-apoptotic function of BAD and DAPK1. In fibroblast, is required for EGF-stimulated phosphorylation of CREB1 and histone H3 at 'Ser-10', which results in the subsequent transcriptional activation of several immediate-early genes. In response to mitogenic stimulation (EGF and PMA), phosphorylates and activates NR4A1/NUR77 and ETV1/ER81 transcription factors and the cofactor CREBBP. Upon insulin-derived signal, acts indirectly on the transcription regulation of several genes by phosphorylating GSK3B at 'Ser-9' and inhibiting its activity. Phosphorylates RPS6 in response to serum or EGF via an mTOR-independent mechanism and promotes translation initiation by facilitating assembly of the preinitiation complex. In response to insulin, phosphorylates EIF4B, enhancing EIF4B affinity for the EIF3 complex and stimulating cap-dependent translation. Is involved in the mTOR nutrient-sensing pathway by directly phosphorylating TSC2 at 'Ser-1798', which potently inhibits TSC2 ability to suppress mTOR signaling, and mediates phosphorylation of RPTOR, which regulates mTORC1 activity and may promote rapamycin-sensitive signaling independently of the PI3K/AKT pathway. Mediates cell survival by phosphorylating the pro-apoptotic proteins BAD and DAPK1 and suppressing their pro-apoptotic function. Promotes the survival of hepatic stellate cells by phosphorylating CEBPB in response to the hepatotoxin carbon tetrachloride (CCl4). Is involved in cell cycle regulation by phosphorylating the CDK inhibitor CDKN1B, which promotes CDKN1B association with 14-3-3 proteins and prevents its translocation to the nucleus and inhibition of G1 progression. In LPS-stimulated dendritic cells, is involved in TLR4-induced macropinocytosis, and in myeloma cells, acts as effector of FGFR3-mediated transformation signaling, after direct phosphorylation at Tyr-529 by FGFR3. Negatively regulates EGF-induced MAPK1/3 phosphorylation via phosphorylation of SOS1. Phosphorylates SOS1 at 'Ser-1134' and 'Ser-1161' that create YWHAB and YWHAE binding sites and which contribute to the negative regulation of MAPK1/3 phosphorylation. Phosphorylates EPHA2 at 'Ser-897', the RPS6KA-EPHA2 signaling pathway controls cell migration. Acts as a regulator of osteoblast differentiation by mediating phosphorylation of ATF4, thereby promoting ATF4 transactivation activity. This Mus musculus (Mouse) protein is Ribosomal protein S6 kinase alpha-3 (Rps6ka3).